The following is a 212-amino-acid chain: ATP phosphoribosyltransferase (212 aa).

It belongs to the ATP phosphoribosyltransferase family. Short subfamily. In terms of assembly, heteromultimer composed of HisG and HisZ subunits.

It is found in the cytoplasm. The catalysed reaction is 1-(5-phospho-beta-D-ribosyl)-ATP + diphosphate = 5-phospho-alpha-D-ribose 1-diphosphate + ATP. Its pathway is amino-acid biosynthesis; L-histidine biosynthesis; L-histidine from 5-phospho-alpha-D-ribose 1-diphosphate: step 1/9. Its function is as follows. Catalyzes the condensation of ATP and 5-phosphoribose 1-diphosphate to form N'-(5'-phosphoribosyl)-ATP (PR-ATP). Has a crucial role in the pathway because the rate of histidine biosynthesis seems to be controlled primarily by regulation of HisG enzymatic activity. In Halalkalibacterium halodurans (strain ATCC BAA-125 / DSM 18197 / FERM 7344 / JCM 9153 / C-125) (Bacillus halodurans), this protein is ATP phosphoribosyltransferase (hisG).